The following is a 249-amino-acid chain: tRNA (guanine-N(1)-)-methyltransferase (249 aa).

Residues Gly112 and 132 to 137 (LGDFVL) each bind S-adenosyl-L-methionine.

This sequence belongs to the RNA methyltransferase TrmD family. Homodimer.

It is found in the cytoplasm. It carries out the reaction guanosine(37) in tRNA + S-adenosyl-L-methionine = N(1)-methylguanosine(37) in tRNA + S-adenosyl-L-homocysteine + H(+). In terms of biological role, specifically methylates guanosine-37 in various tRNAs. In Citrifermentans bemidjiense (strain ATCC BAA-1014 / DSM 16622 / JCM 12645 / Bem) (Geobacter bemidjiensis), this protein is tRNA (guanine-N(1)-)-methyltransferase.